Here is a 705-residue protein sequence, read N- to C-terminus: Polyphosphate kinase (705 aa).

An ATP-binding site is contributed by asparagine 58. Positions 389 and 419 each coordinate Mg(2+). The active-site Phosphohistidine intermediate is histidine 449. Residues tyrosine 482, arginine 578, and histidine 606 each contribute to the ATP site.

Belongs to the polyphosphate kinase 1 (PPK1) family. It depends on Mg(2+) as a cofactor. Post-translationally, an intermediate of this reaction is the autophosphorylated ppk in which a phosphate is covalently linked to a histidine residue through a N-P bond.

It carries out the reaction [phosphate](n) + ATP = [phosphate](n+1) + ADP. In terms of biological role, catalyzes the reversible transfer of the terminal phosphate of ATP to form a long-chain polyphosphate (polyP). This is Polyphosphate kinase from Halalkalibacterium halodurans (strain ATCC BAA-125 / DSM 18197 / FERM 7344 / JCM 9153 / C-125) (Bacillus halodurans).